Here is a 149-residue protein sequence, read N- to C-terminus: Small ribosomal subunit protein bS16 (149 aa).

Residues 115–149 form a disordered region; that stretch reads KLKAAKSEADAKAKAEAEAAATEEAPAEEPAAEAE. A compositionally biased stretch (basic and acidic residues) spans 119–131; the sequence is AKSEADAKAKAEA. Over residues 139–149 the composition is skewed to acidic residues; the sequence is APAEEPAAEAE.

It belongs to the bacterial ribosomal protein bS16 family.

This chain is Small ribosomal subunit protein bS16, found in Bifidobacterium adolescentis (strain ATCC 15703 / DSM 20083 / NCTC 11814 / E194a).